Here is a 512-residue protein sequence, read N- to C-terminus: Protein OS-9 homolog (512 aa).

An N-terminal signal peptide occupies residues 1-17; it reads MRRFNLILLASLQLVGA. Residues 71–91 are disordered; the sequence is QAREADARDNEAENKDQDGPS. The segment covering 73 to 88 has biased composition (basic and acidic residues); sequence READARDNEAENKDQD. Asparagine 118 carries an N-linked (GlcNAc...) asparagine glycan. The 140-residue stretch at 149 to 288 folds into the MRH domain; it reads DSCLYFMSGW…VVNTPRLCND (140 aa). Cysteines 151 and 164 form a disulfide. The a mannooligosaccharide derivative site is built by tryptophan 158, tryptophan 159, glutamine 171, aspartate 242, arginine 248, glutamate 270, and tyrosine 276. Cystine bridges form between cysteine 241-cysteine 274 and cysteine 256-cysteine 286. Disordered regions lie at residues 329-349 and 485-512; these read QVPL…PRDV and AAAK…KDEL. The segment covering 492–504 has biased composition (acidic residues); the sequence is DDEEEVVEGSEEQ. Residues 509–512 carry the Prevents secretion from ER motif; it reads KDEL.

This sequence belongs to the OS-9 family. As to quaternary structure, interacts with missfolded ER lumenal proteins.

It localises to the endoplasmic reticulum membrane. In terms of biological role, lectin involved in the quality control of the secretory pathway. As a member of the endoplasmic reticulum-associated degradation lumenal (ERAD-L) surveillance system, targets misfolded endoplasmic reticulum lumenal glycoproteins for degradation. This chain is Protein OS-9 homolog (YOS1), found in Gibberella zeae (strain ATCC MYA-4620 / CBS 123657 / FGSC 9075 / NRRL 31084 / PH-1) (Wheat head blight fungus).